The following is a 302-amino-acid chain: Proteasome subunit beta (302 aa).

The span at 1–10 (MAGRVREVSH) shows a compositional bias: basic and acidic residues. Residues 1 to 21 (MAGRVREVSHSSDQSGRLPAA) are disordered. The propeptide at 1-67 (MAGRVREVSH…GPGAGEPPHA (67 aa)) is removed in mature form; by autocatalysis. Thr-68 functions as the Nucleophile in the catalytic mechanism. The segment at 283–302 (RRGNPGGNPGISAVHGDGGN) is disordered.

Belongs to the peptidase T1B family. The 20S proteasome core is composed of 14 alpha and 14 beta subunits that assemble into four stacked heptameric rings, resulting in a barrel-shaped structure. The two inner rings, each composed of seven catalytic beta subunits, are sandwiched by two outer rings, each composed of seven alpha subunits. The catalytic chamber with the active sites is on the inside of the barrel. Has a gated structure, the ends of the cylinder being occluded by the N-termini of the alpha-subunits. Is capped by the proteasome-associated ATPase, ARC.

The protein localises to the cytoplasm. It carries out the reaction Cleavage of peptide bonds with very broad specificity.. It participates in protein degradation; proteasomal Pup-dependent pathway. With respect to regulation, the formation of the proteasomal ATPase ARC-20S proteasome complex, likely via the docking of the C-termini of ARC into the intersubunit pockets in the alpha-rings, may trigger opening of the gate for substrate entry. Interconversion between the open-gate and close-gate conformations leads to a dynamic regulation of the 20S proteasome proteolysis activity. Component of the proteasome core, a large protease complex with broad specificity involved in protein degradation. The sequence is that of Proteasome subunit beta from Kineococcus radiotolerans (strain ATCC BAA-149 / DSM 14245 / SRS30216).